The following is a 193-amino-acid chain: MTEYLLLLVGTVLINNFVLVKFLGLCPFMGVSGKLETAIGMGLATTFVMTLASACSYLMEHYILIPLNIAYLRTLAFILVIAVVVQFTEMVIRKSSPTLYRLLGIFLPLITTNCAVLGVALLSINEHHNFIQSIIYGFGAATGFSLVLILFAAMRERLVAADVPTPFRGVSIAMITAGLMSLAFMGFTGLIKI.

The next 6 helical transmembrane spans lie at 5-25, 39-59, 63-83, 102-122, 134-154, and 171-191; these read LLLLVGTVLINNFVLVKFLGL, IGMGLATTFVMTLASACSYLM, ILIPLNIAYLRTLAFILVIAV, LLGIFLPLITTNCAVLGVALL, IIYGFGAATGFSLVLILFAAM, and SIAMITAGLMSLAFMGFTGLI.

This sequence belongs to the NqrDE/RnfAE family. In terms of assembly, the complex is composed of six subunits: RnfA, RnfB, RnfC, RnfD, RnfE and RnfG.

It localises to the cell inner membrane. Functionally, part of a membrane-bound complex that couples electron transfer with translocation of ions across the membrane. In Aeromonas hydrophila subsp. hydrophila (strain ATCC 7966 / DSM 30187 / BCRC 13018 / CCUG 14551 / JCM 1027 / KCTC 2358 / NCIMB 9240 / NCTC 8049), this protein is Ion-translocating oxidoreductase complex subunit A.